A 289-amino-acid polypeptide reads, in one-letter code: Nucleotide-binding protein COPRO5265_0725 (289 aa).

9-16 (GLSGAGKS) provides a ligand contact to ATP. GTP is bound at residue 59-62 (DSRS).

This sequence belongs to the RapZ-like family.

Displays ATPase and GTPase activities. The chain is Nucleotide-binding protein COPRO5265_0725 from Coprothermobacter proteolyticus (strain ATCC 35245 / DSM 5265 / OCM 4 / BT).